The following is a 207-amino-acid chain: Octanoyltransferase (207 aa).

In terms of domain architecture, BPL/LPL catalytic spans 27–203 (ASTEDELWVV…HLETQFTPKA (177 aa)). Residues 66–73 (RGGQITYH), 133–135 (SLG), and 146–148 (GLA) contribute to the substrate site. C164 acts as the Acyl-thioester intermediate in catalysis.

It belongs to the LipB family.

It is found in the cytoplasm. It catalyses the reaction octanoyl-[ACP] + L-lysyl-[protein] = N(6)-octanoyl-L-lysyl-[protein] + holo-[ACP] + H(+). Its pathway is protein modification; protein lipoylation via endogenous pathway; protein N(6)-(lipoyl)lysine from octanoyl-[acyl-carrier-protein]: step 1/2. In terms of biological role, catalyzes the transfer of endogenously produced octanoic acid from octanoyl-acyl-carrier-protein onto the lipoyl domains of lipoate-dependent enzymes. Lipoyl-ACP can also act as a substrate although octanoyl-ACP is likely to be the physiological substrate. The chain is Octanoyltransferase from Neisseria meningitidis serogroup C / serotype 2a (strain ATCC 700532 / DSM 15464 / FAM18).